The primary structure comprises 355 residues: U5 small nuclear ribonucleoprotein 40 kDa protein (355 aa).

WD repeat units follow at residues 60-99, 103-142, 145-185, 187-226, 230-269, 280-319, and 322-355; these read GHKG…INYS, GHKG…LIKR, EHSG…STHL, QHKY…DPLY, SHQD…PPNR, NFEK…LQYC, and GHSG…EIKP.

As to quaternary structure, component of the pre-catalytic and catalytic spliceosome complexes. Component of the postcatalytic spliceosome P complex. Part of the U5 snRNP complex. Component of the U4/U6-U5 tri-snRNP complex.

It is found in the nucleus. Functionally, required for pre-mRNA splicing as component of the activated spliceosome. Component of the U5 small nuclear ribonucleoprotein (snRNP) complex and the U4/U6-U5 tri-snRNP complex, building blocks of the spliceosome. This chain is U5 small nuclear ribonucleoprotein 40 kDa protein (snrnp40), found in Dictyostelium discoideum (Social amoeba).